A 365-amino-acid chain; its full sequence is Nudix hydrolase 24, chloroplastic (365 aa).

A chloroplast-targeting transit peptide spans 1 to 30; it reads MASAFCSLCPTPTSLFSSHALIPTLQWRSS. The Nudix hydrolase domain occupies 196-337; it reads GYAIHVNGYV…KDSCSLVIID (142 aa). A Nudix box motif is present at residues 235–256; that stretch reads GGLPHGISVCENLVKECEEEAG. Residues glutamate 250 and glutamate 254 each contribute to the Mg(2+) site.

The protein belongs to the Nudix hydrolase family. Mg(2+) serves as cofactor. Requires Mn(2+) as cofactor. In terms of tissue distribution, expressed in leaves.

The protein resides in the plastid. It localises to the chloroplast. Functionally, probably mediates the hydrolysis of some nucleoside diphosphate derivatives. The polypeptide is Nudix hydrolase 24, chloroplastic (NUDT24) (Arabidopsis thaliana (Mouse-ear cress)).